A 470-amino-acid polypeptide reads, in one-letter code: Sulfate adenylyltransferase subunit 1 (470 aa).

Positions 22 to 236 constitute a tr-type G domain; sequence KELLRFITCG…YLETIKIDYA (215 aa). A G1 region spans residues 31–38; the sequence is GSVDDGKS. Residue 31 to 38 coordinates GTP; sequence GSVDDGKS. The segment at 89–93 is G2; it reads GITID. Residues 110 to 113 form a G3 region; sequence DTPG. GTP is bound by residues 110-114 and 165-168; these read DTPGH and NKMD. The segment at 165-168 is G4; it reads NKMD. The tract at residues 202-204 is G5; that stretch reads SAL.

This sequence belongs to the TRAFAC class translation factor GTPase superfamily. Classic translation factor GTPase family. CysN/NodQ subfamily. Heterodimer composed of CysD, the smaller subunit, and CysN.

It catalyses the reaction sulfate + ATP + H(+) = adenosine 5'-phosphosulfate + diphosphate. Its pathway is sulfur metabolism; hydrogen sulfide biosynthesis; sulfite from sulfate: step 1/3. Its function is as follows. With CysD forms the ATP sulfurylase (ATPS) that catalyzes the adenylation of sulfate producing adenosine 5'-phosphosulfate (APS) and diphosphate, the first enzymatic step in sulfur assimilation pathway. APS synthesis involves the formation of a high-energy phosphoric-sulfuric acid anhydride bond driven by GTP hydrolysis by CysN coupled to ATP hydrolysis by CysD. In Francisella tularensis subsp. novicida (strain U112), this protein is Sulfate adenylyltransferase subunit 1.